We begin with the raw amino-acid sequence, 260 residues long: MFDIGVNLTSTQFASDRQKVVKRARDAGVTGMLITGTNALESQHAQRLAEAQPGFCWSTAGVHPHHASEWSTEIASTLRRLAEKPEVVAIGECGLDFNRNLSAHEQQEYAFDAQLALAAELNMPVFLHCREAHARFAAVLEPWLPKLAGAVIHCFTGTRDELEACLAMGLSVGITGWVCDERRGLELRELLPLIPADRLLLETDAPYLLPRDMRPRPTSRRNEPCFLPHIVNQVATWRGESAEELATRIDQNARTLFRLA.

Residues Glu-92, His-128, and His-153 each coordinate a divalent metal cation.

Belongs to the metallo-dependent hydrolases superfamily. TatD-type hydrolase family. TatD subfamily. In terms of assembly, monomer. It depends on Mg(2+) as a cofactor.

It is found in the cytoplasm. Functionally, 3'-5' exonuclease that prefers single-stranded DNA and RNA. May play a role in the H(2)O(2)-induced DNA damage repair. The protein is 3'-5' ssDNA/RNA exonuclease TatD of Pantoea vagans (strain C9-1) (Pantoea agglomerans (strain C9-1)).